A 362-amino-acid polypeptide reads, in one-letter code: Phosphoserine aminotransferase (362 aa).

R42 is an L-glutamate binding site. Residues 76 to 77 (AR), W102, T154, D174, and Q197 contribute to the pyridoxal 5'-phosphate site. At K198 the chain carries N6-(pyridoxal phosphate)lysine. Residue 239–240 (NT) participates in pyridoxal 5'-phosphate binding.

It belongs to the class-V pyridoxal-phosphate-dependent aminotransferase family. SerC subfamily. As to quaternary structure, homodimer. It depends on pyridoxal 5'-phosphate as a cofactor.

It is found in the cytoplasm. It catalyses the reaction O-phospho-L-serine + 2-oxoglutarate = 3-phosphooxypyruvate + L-glutamate. It carries out the reaction 4-(phosphooxy)-L-threonine + 2-oxoglutarate = (R)-3-hydroxy-2-oxo-4-phosphooxybutanoate + L-glutamate. It functions in the pathway amino-acid biosynthesis; L-serine biosynthesis; L-serine from 3-phospho-D-glycerate: step 2/3. Its pathway is cofactor biosynthesis; pyridoxine 5'-phosphate biosynthesis; pyridoxine 5'-phosphate from D-erythrose 4-phosphate: step 3/5. Functionally, catalyzes the reversible conversion of 3-phosphohydroxypyruvate to phosphoserine and of 3-hydroxy-2-oxo-4-phosphonooxybutanoate to phosphohydroxythreonine. In Buchnera aphidicola subsp. Cinara cedri (strain Cc), this protein is Phosphoserine aminotransferase.